Consider the following 195-residue polypeptide: MSALNKIVKRSSSQPTETDLLVAQCLYDLESSSKDMAKELRPLQITSAREVEVGGGKKAIVVFVPQPLLKAFHKCQARLTRELEKKFADRHVIFIAQRRILPKPGRKSRVTQKRPRSRTLTAVHNAILEDIVFPTEIIGKRTRQATDGRKTIKVFLDNRDANTVDYKLGSFSSVYHKLTGKNVTFEFPVATGEGL.

A phosphothreonine mark is found at T146 and T151. Residues S172 and S173 each carry the phosphoserine modification.

The protein belongs to the eukaryotic ribosomal protein eS7 family. Component of the small ribosomal subunit (SSU). Mature yeast ribosomes consist of a small (40S) and a large (60S) subunit. The 40S small subunit contains 1 molecule of ribosomal RNA (18S rRNA) and at least 33 different proteins. The large 60S subunit contains 3 rRNA molecules (25S, 5.8S and 5S rRNA) and at least 46 different proteins. Interacts with snoRNA U3. uS11 interacts with MPP10. Component of the ribosomal small subunit (SSU) processome composed of at least 40 protein subunits and snoRNA U3.

It is found in the cytoplasm. It localises to the nucleus. The protein resides in the nucleolus. Component of the ribosome, a large ribonucleoprotein complex responsible for the synthesis of proteins in the cell. The small ribosomal subunit (SSU) binds messenger RNAs (mRNAs) and translates the encoded message by selecting cognate aminoacyl-transfer RNA (tRNA) molecules. The large subunit (LSU) contains the ribosomal catalytic site termed the peptidyl transferase center (PTC), which catalyzes the formation of peptide bonds, thereby polymerizing the amino acids delivered by tRNAs into a polypeptide chain. The nascent polypeptides leave the ribosome through a tunnel in the LSU and interact with protein factors that function in enzymatic processing, targeting, and the membrane insertion of nascent chains at the exit of the ribosomal tunnel. eS7 is involved in nucleolar processing of pre-18S ribosomal RNA and ribosome assembly. The polypeptide is Small ribosomal subunit protein eS7 (rps7) (Schizosaccharomyces pombe (strain 972 / ATCC 24843) (Fission yeast)).